A 146-amino-acid chain; its full sequence is MKIYVDADACPVKDVIIYEATNAEIPVTLVTSFSHYSNAKQPTGVETIYVDSGADAADYRIMQLAKKEDLIVTQDYGLASLALAKGCIVLHHKGYKYTNENIEQLLQTRYLSAMVRKSGKRTKGPKPFTAEDKEKFRVLFKSIIAL.

It belongs to the UPF0178 family.

The protein is UPF0178 protein BcerKBAB4_2842 of Bacillus mycoides (strain KBAB4) (Bacillus weihenstephanensis).